The primary structure comprises 490 residues: GTPase Der (490 aa).

The EngA-type G 1 domain occupies 1–165 (MRIAILGRPN…RIRQVAEIPL (165 aa)). Residues 7 to 14 (GRPNVGKS), 54 to 58 (DTGGV), and 117 to 120 (NKAD) each bind GTP. Positions 165–184 (LPSAEEQENTQEEEFSSKES) are disordered. The segment covering 169–178 (EEQENTQEEE) has biased composition (acidic residues). The region spanning 227-400 (LKVALIGHPN…AVDDVYTIAT (174 aa)) is the EngA-type G 2 domain. Residues 233–240 (GHPNVGKS), 280–284 (DTAGL), and 345–348 (NKWD) contribute to the GTP site. The KH-like domain occupies 401–485 (TKLSTSLVNK…PFDLEYKAKP (85 aa)).

The protein belongs to the TRAFAC class TrmE-Era-EngA-EngB-Septin-like GTPase superfamily. EngA (Der) GTPase family. Associates with the 50S ribosomal subunit.

Functionally, GTPase that plays an essential role in the late steps of ribosome biogenesis. The sequence is that of GTPase Der from Chlamydia muridarum (strain MoPn / Nigg).